The following is a 191-amino-acid chain: SCO2-like protein RP031 (191 aa).

This sequence belongs to the SCO1/2 family.

The chain is SCO2-like protein RP031 from Rickettsia prowazekii (strain Madrid E).